Here is a 126-residue protein sequence, read N- to C-terminus: Large ribosomal subunit protein bL12 (126 aa).

This sequence belongs to the bacterial ribosomal protein bL12 family. As to quaternary structure, homodimer. Part of the ribosomal stalk of the 50S ribosomal subunit. Forms a multimeric L10(L12)X complex, where L10 forms an elongated spine to which 2 to 4 L12 dimers bind in a sequential fashion. Binds GTP-bound translation factors.

Functionally, forms part of the ribosomal stalk which helps the ribosome interact with GTP-bound translation factors. Is thus essential for accurate translation. The chain is Large ribosomal subunit protein bL12 from Elusimicrobium minutum (strain Pei191).